We begin with the raw amino-acid sequence, 241 residues long: Transcription factor HEC1 (241 aa).

In terms of domain architecture, bHLH spans 128–177; the sequence is ISKDPQSVAARHRRERISERIRILQRLVPGGTKMDTASMLDEAIHYVKFL.

As to quaternary structure, homodimer. Interacts with SPT. Interacts with BZIP30. As to expression, flowers, especially in gynoecium.

The protein localises to the nucleus. In terms of biological role, required for the female reproductive tract development and fertility. This is Transcription factor HEC1 (HEC1) from Arabidopsis thaliana (Mouse-ear cress).